A 680-amino-acid chain; its full sequence is Probable Xaa-Pro aminopeptidase P (680 aa).

Residues D477, D488, E586, and E600 each contribute to the Mn(2+) site.

It belongs to the peptidase M24B family. It depends on Mn(2+) as a cofactor.

It catalyses the reaction Release of any N-terminal amino acid, including proline, that is linked to proline, even from a dipeptide or tripeptide.. Functionally, catalyzes the removal of a penultimate prolyl residue from the N-termini of peptides. This is Probable Xaa-Pro aminopeptidase P (AMPP) from Podospora anserina (strain S / ATCC MYA-4624 / DSM 980 / FGSC 10383) (Pleurage anserina).